Reading from the N-terminus, the 397-residue chain is Potassium channel subfamily K member 4 (397 aa).

Residues 1–3 (MRS) lie on the Cytoplasmic side of the membrane. Residues 4-24 (TTLLALLALVLLYLVSGALVF) form a helical membrane-spanning segment. Topologically, residues 25 to 88 (QALEQPHEQQ…WTNSSNHSSA (64 aa)) are extracellular. N-linked (GlcNAc...) asparagine glycosylation is present at N81. An intramembrane region (helical) is located at residues 89-103 (WNLGSAFFFSGTIIT). K(+) contacts are provided by T104, I105, G106, and Y107. The tract at residues 104–109 (TIGYGN) is selectivity filter 1. An intramembrane segment occupies 104–110 (TIGYGNI). Residues 111-118 (ALHTDAGR) lie on the Extracellular side of the membrane. Residues 119-151 (LFCIFYALVGIPLFGMLLAGVGDRLGSSLRRGI) form a helical membrane-spanning segment. The Cytoplasmic segment spans residues 152 to 173 (GHIEAVFLKWHVPPGLVRMLSA). The helical transmembrane segment at 174–195 (VLFLLIGCLLFVLTPTFVFSYM) threads the bilayer. The Extracellular segment spans residues 196-200 (ESWSK). The segment at residues 201–214 (LEAIYFVIVTLTTV) is an intramembrane region (helical). Residues T213, V214, G215, and F216 each contribute to the K(+) site. Residues 213-218 (TVGFGD) form a selectivity filter 2 region. An intramembrane segment occupies 215–220 (GFGDYV). The Extracellular portion of the chain corresponds to 221-234 (PGDGTGQNSPAYQP). Residues 235 to 261 (LVWFWILFGLAYFASVLTTIGNWLRAV) form a helical membrane-spanning segment. The Cytoplasmic segment spans residues 262–397 (SRRTRAEMGG…GRLRDKAVPV (136 aa)). Polar residues predominate over residues 282-292 (TVTARVTQRTG). Residues 282–397 (TVTARVTQRT…GRLRDKAVPV (116 aa)) are disordered. Over residues 369–388 (PRGRRRPNPTKKPSRPRGPG) the composition is skewed to basic residues.

Belongs to the two pore domain potassium channel (TC 1.A.1.8) family. In terms of assembly, homodimer; disulfide-linked. Forms heterodimers with other 2-pore domain K(+) channel subunits, such as KCNK2 and KCNK10. In terms of tissue distribution, detected in brain, and at much lower levels in liver, skeletal muscle and testis.

It localises to the cell membrane. Its subcellular location is the cell projection. It is found in the axon. The enzyme catalyses K(+)(in) = K(+)(out). The catalysed reaction is Rb(+)(in) = Rb(+)(out). It carries out the reaction Cs(+)(in) = Cs(+)(out). Activated by various stimuli including intracellular basic pH, mechanical stretch and heat and polyunsaturated fatty acids such as arachidonic acid. Functionally, k(+) channel that conducts voltage-dependent outward rectifying currents upon membrane depolarization. Voltage sensing is coupled to K(+) electrochemical gradient in an 'ion flux gating' mode where outward but not inward ion flow opens the gate. Converts to voltage-independent 'leak' conductance mode upon stimulation by various stimuli including mechanical membrane stretch, basic pH, heat and lipids. Homo- and heterodimerizes to form functional channels with distinct regulatory and gating properties. At trigeminal A-beta afferent nerves, the heterodimer of KCNK2/TREK-1 and KCNK4/TRAAK is mostly coexpressed at nodes of Ranvier where it conducts voltage-independent mechanosensitive and thermosensitive currents, allowing rapid action potential repolarization, high speed and high frequence saltatory conduction on myelinated nerves to ensure prompt sensory responses. Permeable to other monovalent cations such as Rb(+) and Cs(+). This is Potassium channel subfamily K member 4 from Rattus norvegicus (Rat).